Here is a 325-residue protein sequence, read N- to C-terminus: Pyruvate dehydrogenase E1 component subunit beta (325 aa).

Thiamine diphosphate is bound at residue Glu60.

As to quaternary structure, heterodimer of an alpha and a beta chain. It depends on thiamine diphosphate as a cofactor.

The enzyme catalyses N(6)-[(R)-lipoyl]-L-lysyl-[protein] + pyruvate + H(+) = N(6)-[(R)-S(8)-acetyldihydrolipoyl]-L-lysyl-[protein] + CO2. The pyruvate dehydrogenase complex catalyzes the overall conversion of pyruvate to acetyl-CoA and CO(2). It contains multiple copies of three enzymatic components: pyruvate dehydrogenase (E1), dihydrolipoamide acetyltransferase (E2) and lipoamide dehydrogenase (E3). This is Pyruvate dehydrogenase E1 component subunit beta (pdhB) from Staphylococcus aureus (strain COL).